The following is a 1577-amino-acid chain: Probable serine/threonine-protein kinase gdt9 (1577 aa).

The N-terminal stretch at 1–16 (MKTFLLIFLLICVCKG) is a signal peptide. At 17–966 (ITNITTPSIY…NNEDNHKKLV (950 aa)) the chain is on the extracellular side. Residues 967-987 (IALSVSIPVAALLVILCFGIF) traverse the membrane as a helical segment. Topologically, residues 988–1577 (ICYNNNKKNK…SLVKIFKRFN (590 aa)) are cytoplasmic. The span at 998–1014 (NETKGKDIETNTDKKDD) shows a compositional bias: basic and acidic residues. 2 disordered regions span residues 998–1019 (NETK…NENE) and 1050–1128 (TLPP…FPTI). Over residues 1050–1082 (TLPPQSTISIDTSPSSENTTFTESLTPKKSATV) the composition is skewed to polar residues. The segment covering 1091–1115 (NSTNESTVSNSSSENNSDNNNNNNN) has biased composition (low complexity). One can recognise a Protein kinase domain in the interval 1290–1573 (LDFDEICGQG…EIVFSLVKIF (284 aa)). Residues 1296-1304 (CGQGTYGMV) and lysine 1317 each bind ATP. The active-site Proton acceptor is the aspartate 1436.

This sequence in the N-terminal section; belongs to the GDT family. The protein in the C-terminal section; belongs to the protein kinase superfamily. TKL Ser/Thr protein kinase family.

The protein localises to the membrane. The enzyme catalyses L-seryl-[protein] + ATP = O-phospho-L-seryl-[protein] + ADP + H(+). The catalysed reaction is L-threonyl-[protein] + ATP = O-phospho-L-threonyl-[protein] + ADP + H(+). The sequence is that of Probable serine/threonine-protein kinase gdt9 (gdt9) from Dictyostelium discoideum (Social amoeba).